Reading from the N-terminus, the 1101-residue chain is Type II inositol polyphosphate 5-phosphatase 15 (1101 aa).

Over residues 31-40 (RSAYSSSSSS) the composition is skewed to low complexity. Residues 31 to 54 (RSAYSSSSSSGDDESQPSVDDSNK) are disordered. WD repeat units lie at residues 121–162 (LRET…GSGR), 180–219 (FGSA…GIEE), 225–263 (AHRG…GKSL), 403–432 (DDSR…MRWD), 433–481 (GNGN…GGWV), and 483–519 (HSGP…PLDN). 2 catalytic regions span residues 749–765 (DMVI…DDIT) and 828–843 (KKRI…YRDN). Residue lysine 907 forms a Glycyl lysine isopeptide (Lys-Gly) (interchain with G-Cter in ubiquitin) linkage.

Belongs to the inositol polyphosphate 5-phosphatase family. Mg(2+) is required as a cofactor. Predominantly expressed in interfascicular fibers and vascular bundles. Expressed in seedlings, stems, roots and flowers. Expressed at lower level in mature leaves.

The catalysed reaction is a 1,2-diacyl-sn-glycero-3-phospho-(1D-myo-inositol-4,5-bisphosphate) + H2O = a 1,2-diacyl-sn-glycero-3-phospho-(1D-myo-inositol 4-phosphate) + phosphate. The enzyme catalyses a 1,2-diacyl-sn-glycero-3-phospho-(1D-myo-inositol-3,4,5-trisphosphate) + H2O = a 1,2-diacyl-sn-glycero-3-phospho-(1D-myo-inositol-3,4-bisphosphate) + phosphate. It carries out the reaction 1D-myo-inositol 1,4,5-trisphosphate + H2O = 1D-myo-inositol 1,4-bisphosphate + phosphate. Has phosphatase activity toward PtdIns(4,5)P2, PtdIns(3,4,5)P3 and Ins(1,4,5)P3. Has a higher substrate affinity toward PtdIns(4,5)P2. Required for secondary wall synthesis and actin organization in fiber cells. In Arabidopsis thaliana (Mouse-ear cress), this protein is Type II inositol polyphosphate 5-phosphatase 15.